Here is a 104-residue protein sequence, read N- to C-terminus: Small ribosomal subunit protein bS6 (104 aa).

Belongs to the bacterial ribosomal protein bS6 family.

In terms of biological role, binds together with bS18 to 16S ribosomal RNA. This chain is Small ribosomal subunit protein bS6, found in Elusimicrobium minutum (strain Pei191).